Reading from the N-terminus, the 487-residue chain is UDP-N-acetylmuramoyl-L-alanyl-D-glutamate--2,6-diaminopimelate ligase (487 aa).

Ser30 contacts UDP-N-acetyl-alpha-D-muramoyl-L-alanyl-D-glutamate. 109-115 contacts ATP; that stretch reads GTNGKTS. UDP-N-acetyl-alpha-D-muramoyl-L-alanyl-D-glutamate contacts are provided by residues 151–152, Ser178, and Arg186; that span reads TT. Lys218 carries the N6-carboxylysine modification. Meso-2,6-diaminopimelate is bound by residues Arg379, 403–406, Gly455, and Glu459; that span reads DNPR. The short motif at 403 to 406 is the Meso-diaminopimelate recognition motif element; the sequence is DNPR.

It belongs to the MurCDEF family. MurE subfamily. The cofactor is Mg(2+). Carboxylation is probably crucial for Mg(2+) binding and, consequently, for the gamma-phosphate positioning of ATP.

The protein localises to the cytoplasm. The enzyme catalyses UDP-N-acetyl-alpha-D-muramoyl-L-alanyl-D-glutamate + meso-2,6-diaminopimelate + ATP = UDP-N-acetyl-alpha-D-muramoyl-L-alanyl-gamma-D-glutamyl-meso-2,6-diaminopimelate + ADP + phosphate + H(+). The protein operates within cell wall biogenesis; peptidoglycan biosynthesis. Catalyzes the addition of meso-diaminopimelic acid to the nucleotide precursor UDP-N-acetylmuramoyl-L-alanyl-D-glutamate (UMAG) in the biosynthesis of bacterial cell-wall peptidoglycan. In Alkaliphilus oremlandii (strain OhILAs) (Clostridium oremlandii (strain OhILAs)), this protein is UDP-N-acetylmuramoyl-L-alanyl-D-glutamate--2,6-diaminopimelate ligase.